The following is a 198-amino-acid chain: Ras-like protein 2 (198 aa).

18-25 (GDGGVGKS) contributes to the GTP binding site. The Effector region motif lies at 40–48 (YDPTIEDSY). Residues 65–69 (DTAGQ) and 124–127 (NKCD) contribute to the GTP site. Cys-195 bears the Cysteine methyl ester mark. The S-farnesyl cysteine moiety is linked to residue Cys-195. A propeptide spans 196–198 (IVM) (removed in mature form).

The protein belongs to the small GTPase superfamily. Ras family.

It localises to the cell membrane. The enzyme catalyses GTP + H2O = GDP + phosphate + H(+). Its activity is regulated as follows. Alternates between an inactive form bound to GDP and an active form bound to GTP. Activated by a guanine nucleotide-exchange factor (GEF) and inactivated by a GTPase-activating protein (GAP). The protein is Ras-like protein 2 (RAS2) of Mucor circinelloides f. lusitanicus (Mucor racemosus var. lusitanicus).